A 350-amino-acid polypeptide reads, in one-letter code: Purine-binding protein BAB2_0673 (350 aa).

Residues 1–17 (MVIATVAGFMLGGAAHA) form the signal peptide. Adenine-binding residues include tryptophan 36, tryptophan 185, and aspartate 211.

The protein belongs to the BMP lipoprotein family.

Binds adenine and probably also other purines, such as guanine. May play a role in adenine and guanine uptake. May be part of an ABC-type uptake system for adenine and similar ligands. The chain is Purine-binding protein BAB2_0673 from Brucella abortus (strain 2308).